A 142-amino-acid polypeptide reads, in one-letter code: MAKVVSRIVKLQIESGSAKPSPPVGPAIGQAGIPIMAFCKAFNAATEGMEKGIPIPTTVTCYKDKSFTFTMSQPPVSFFLKKEVGIKSGSKLPGKESCGSITRENIRKIAQLKMQDMGAIDIEGAMRMVEGSACSMGISVVD.

This sequence belongs to the universal ribosomal protein uL11 family. Part of the ribosomal stalk of the 50S ribosomal subunit. Interacts with L10 and the large rRNA to form the base of the stalk. L10 forms an elongated spine to which L12 dimers bind in a sequential fashion forming a multimeric L10(L12)X complex. In terms of processing, one or more lysine residues are methylated.

In terms of biological role, forms part of the ribosomal stalk which helps the ribosome interact with GTP-bound translation factors. The protein is Large ribosomal subunit protein uL11 of Liberibacter asiaticus (Citrus greening disease).